Reading from the N-terminus, the 446-residue chain is N-succinylarginine dihydrolase 2 (446 aa).

Substrate-binding positions include 20-29 (VGLSPGNLAS), Asn-111, and 138-139 (HR). Glu-175 is a catalytic residue. Arg-212 lines the substrate pocket. Residue His-246 is part of the active site. Residues Asp-248 and Asn-361 each contribute to the substrate site. Residue Cys-367 is the Nucleophile of the active site.

It belongs to the succinylarginine dihydrolase family. Homodimer.

The enzyme catalyses N(2)-succinyl-L-arginine + 2 H2O + 2 H(+) = N(2)-succinyl-L-ornithine + 2 NH4(+) + CO2. The protein operates within amino-acid degradation; L-arginine degradation via AST pathway; L-glutamate and succinate from L-arginine: step 2/5. Its function is as follows. Catalyzes the hydrolysis of N(2)-succinylarginine into N(2)-succinylornithine, ammonia and CO(2). The protein is N-succinylarginine dihydrolase 2 of Caulobacter vibrioides (strain ATCC 19089 / CIP 103742 / CB 15) (Caulobacter crescentus).